Reading from the N-terminus, the 350-residue chain is DNA repair protein rhp55 (350 aa).

51 to 58 contributes to the ATP binding site; it reads GAPGMGKT. Residues 331-350 are disordered; the sequence is QSIPTNSSQRRKRSILECES.

It belongs to the RecA family. RAD55 subfamily.

Its subcellular location is the nucleus. Functionally, required for radiation resistance and meiotic viability and acts in recombination and recombinational DNA repair pathways. This is DNA repair protein rhp55 (rhp55) from Schizosaccharomyces pombe (strain 972 / ATCC 24843) (Fission yeast).